The following is a 516-amino-acid chain: Glutamyl-tRNA(Gln) amidotransferase subunit B, mitochondrial (516 aa).

Belongs to the GatB/GatE family. GatB subfamily. Subunit of the heterotrimeric GatCAB amidotransferase (AdT) complex, composed of A, B and C subunits.

The protein localises to the mitochondrion. The enzyme catalyses L-glutamyl-tRNA(Gln) + L-glutamine + ATP + H2O = L-glutaminyl-tRNA(Gln) + L-glutamate + ADP + phosphate + H(+). Functionally, allows the formation of correctly charged Gln-tRNA(Gln) through the transamidation of misacylated Glu-tRNA(Gln) in the mitochondria. The reaction takes place in the presence of glutamine and ATP through an activated gamma-phospho-Glu-tRNA(Gln). The polypeptide is Glutamyl-tRNA(Gln) amidotransferase subunit B, mitochondrial (Drosophila melanogaster (Fruit fly)).